Consider the following 197-residue polypeptide: Peptide deformylase (197 aa).

Fe cation is bound by residues Cys106 and His148. Residue Glu149 is part of the active site. Position 152 (His152) interacts with Fe cation.

It belongs to the polypeptide deformylase family. Fe(2+) serves as cofactor.

It catalyses the reaction N-terminal N-formyl-L-methionyl-[peptide] + H2O = N-terminal L-methionyl-[peptide] + formate. Functionally, removes the formyl group from the N-terminal Met of newly synthesized proteins. Requires at least a dipeptide for an efficient rate of reaction. N-terminal L-methionine is a prerequisite for activity but the enzyme has broad specificity at other positions. The protein is Peptide deformylase of Mycolicibacterium gilvum (strain PYR-GCK) (Mycobacterium gilvum (strain PYR-GCK)).